Reading from the N-terminus, the 315-residue chain is Protein FRA10AC1 (315 aa).

N-acetylmethionine is present on methionine 1. Residues methionine 1 to valine 28 form a disordered region. Residues serine 9 and serine 12 each carry the phosphoserine modification. Lysine 36 carries the post-translational modification N6-acetyllysine. Basic residues predominate over residues glutamate 226–lysine 235. The disordered stretch occupies residues glutamate 226–leucine 315. Basic and acidic residues predominate over residues threonine 236–histidine 245. 5 positions are modified to phosphoserine: serine 251, serine 252, serine 278, serine 283, and serine 285. Residues lysine 268 to serine 278 show a composition bias toward basic and acidic residues. Residues serine 301–leucine 315 are compositionally biased toward acidic residues.

In terms of assembly, interacts with ESS2. As to expression, ubiquitously expressed with higher expression in brain, heart, skeletal muscle, kidney and liver.

It is found in the nucleus. Functionally, may be involved in pre-mRNA splicing. The chain is Protein FRA10AC1 (FRA10AC1) from Homo sapiens (Human).